A 151-amino-acid chain; its full sequence is MTELKEQLSLLGRKTEYKQDYAPEVLEAFDNKHPENDYWVRFNCPEFTSLCPITGQPDFAEIRISYLPDVKMVESKSLKLYLFSFRNHGAFHEDCVNIIMKDLIRLMDPKYIEVTGIFTPRGGISIYPYANYGRPGTKYEEMAIHRLMNHE.

Cys-51 serves as the catalytic Thioimide intermediate. Asp-58 functions as the Proton donor in the catalytic mechanism. Residues 73–75 (VES) and 92–93 (HE) each bind substrate.

It belongs to the GTP cyclohydrolase I family. QueF type 1 subfamily.

It localises to the cytoplasm. The catalysed reaction is 7-aminomethyl-7-carbaguanine + 2 NADP(+) = 7-cyano-7-deazaguanine + 2 NADPH + 3 H(+). It functions in the pathway tRNA modification; tRNA-queuosine biosynthesis. In terms of biological role, catalyzes the NADPH-dependent reduction of 7-cyano-7-deazaguanine (preQ0) to 7-aminomethyl-7-deazaguanine (preQ1). In Bacteroides fragilis (strain ATCC 25285 / DSM 2151 / CCUG 4856 / JCM 11019 / LMG 10263 / NCTC 9343 / Onslow / VPI 2553 / EN-2), this protein is NADPH-dependent 7-cyano-7-deazaguanine reductase.